Consider the following 200-residue polypeptide: MSFSPLIRQLIDALRTLPGVGQKTAQRMALQLLERDRSGGTRLAQALSQAMTGVGHCRQCRTLTEEELCPQCADPRRDDTLLCVVEGPMDVYAVEQTGYRGRYFVLKGHLSPLDGLGPEAIGIPQLVARIEEQGTFTEVILATNPTVEGEATAHYIAQLLTNKGLITSRIAHGVPLGGELELVDGGTLAHSFAGRKPIAL.

The segment at 57-72 (CRQCRTLTEEELCPQC) adopts a C4-type zinc-finger fold. One can recognise a Toprim domain in the interval 80-175 (TLLCVVEGPM…ITSRIAHGVP (96 aa)).

Belongs to the RecR family.

May play a role in DNA repair. It seems to be involved in an RecBC-independent recombinational process of DNA repair. It may act with RecF and RecO. This Pseudomonas fluorescens (strain SBW25) protein is Recombination protein RecR.